We begin with the raw amino-acid sequence, 184 residues long: dCTP deaminase (184 aa).

DCTP-binding positions include K107 to R112, T131 to E133, Q152, Y166, and Q176. The active-site Proton donor/acceptor is the E133.

It belongs to the dCTP deaminase family. Homotrimer.

It catalyses the reaction dCTP + H2O + H(+) = dUTP + NH4(+). The protein operates within pyrimidine metabolism; dUMP biosynthesis; dUMP from dCTP (dUTP route): step 1/2. Its function is as follows. Catalyzes the deamination of dCTP to dUTP. The polypeptide is dCTP deaminase (Paramagnetospirillum magneticum (strain ATCC 700264 / AMB-1) (Magnetospirillum magneticum)).